We begin with the raw amino-acid sequence, 183 residues long: A-type ATP synthase subunit E (183 aa).

The protein belongs to the V-ATPase E subunit family. As to quaternary structure, has multiple subunits with at least A(3), B(3), C, D, E, F, H, I and proteolipid K(x).

Its subcellular location is the cell membrane. Component of the A-type ATP synthase that produces ATP from ADP in the presence of a proton gradient across the membrane. The chain is A-type ATP synthase subunit E from Methanosarcina acetivorans (strain ATCC 35395 / DSM 2834 / JCM 12185 / C2A).